Consider the following 923-residue polypeptide: Tyrosine-protein kinase receptor torso (923 aa).

The signal sequence occupies residues 1–20 (MLIFYAKYAFIFWFFVGSNQ). Residues 21–399 (GEMLLMDKIS…VLLSEGNMVK (379 aa)) are Extracellular-facing. N37, N63, N107, N142, N146, N287, N298, N314, N326, N342, N348, and N377 each carry an N-linked (GlcNAc...) asparagine glycan. Residues 400–420 (LVLFIIVPICCILMLCSLTFC) form a helical membrane-spanning segment. Residues 421–923 (RRNRSEVQAL…EEELYLEPLN (503 aa)) lie on the Cytoplasmic side of the membrane. In terms of domain architecture, Protein kinase spans 475-874 (VLLQDVLGEG…TFSALKHRLG (400 aa)). ATP is bound by residues 481-489 (LGEGAFGLV) and K502. Phosphoserine is present on S608. The segment at 656–687 (YIPKTAEAPKDRPKRKLKPQPKKDSKQDFKSD) is disordered. The span at 676–687 (PKKDSKQDFKSD) shows a compositional bias: basic and acidic residues. D741 functions as the Proton acceptor in the catalytic mechanism.

It belongs to the protein kinase superfamily. Tyr protein kinase family. The cofactor is Mg(2+). In terms of processing, may be auto-phosphorylated on tyrosine residues.

It localises to the membrane. It carries out the reaction L-tyrosyl-[protein] + ATP = O-phospho-L-tyrosyl-[protein] + ADP + H(+). Its function is as follows. Probable receptor tyrosine kinase which is required for determination of anterior and posterior terminal structures in the embryo. During postembryonic development, involved in the initiation of metamorphosis probably by inducing the production of ecdysone in response to prothoracicotropic hormone Ptth. Binding to Ptth stimulates activation of canonical MAPK signaling leading to ERK phosphorylation. This is Tyrosine-protein kinase receptor torso (tor) from Drosophila melanogaster (Fruit fly).